Consider the following 1003-residue polypeptide: Trifunctional purine biosynthetic protein adenosine-3 (1003 aa).

One can recognise an ATP-grasp domain in the interval Lys111 to Asn318. Residues Glu190–Leu193, Glu197, Arg220, and Asn229 contribute to the ATP site. Residues Pro214–Ala235 form a disordered region. Positions Gln216 to Asp225 are enriched in basic and acidic residues. Mg(2+) is bound by residues Glu288 and Asn290. The segment at Gly434–Lys805 is AIRS domain. Residues Val806–Lys1003 are GART domain. A N(1)-(5-phospho-beta-D-ribosyl)glycinamide-binding site is contributed by Gly814–Asn816. (6R)-10-formyltetrahydrofolate-binding positions include Arg867, Met892–Leu895, and Asn909. His911 (proton donor) is an active-site residue. (6R)-10-formyltetrahydrofolate is bound at residue Ala943–Asp947. N(1)-(5-phospho-beta-D-ribosyl)glycinamide is bound at residue Lys973 to Glu976.

It in the N-terminal section; belongs to the GARS family. In the central section; belongs to the AIR synthase family. This sequence in the C-terminal section; belongs to the GART family. Homodimer. Requires Mg(2+) as cofactor. Mn(2+) is required as a cofactor.

It catalyses the reaction 5-phospho-beta-D-ribosylamine + glycine + ATP = N(1)-(5-phospho-beta-D-ribosyl)glycinamide + ADP + phosphate + H(+). It carries out the reaction 2-formamido-N(1)-(5-O-phospho-beta-D-ribosyl)acetamidine + ATP = 5-amino-1-(5-phospho-beta-D-ribosyl)imidazole + ADP + phosphate + H(+). The enzyme catalyses N(1)-(5-phospho-beta-D-ribosyl)glycinamide + (6R)-10-formyltetrahydrofolate = N(2)-formyl-N(1)-(5-phospho-beta-D-ribosyl)glycinamide + (6S)-5,6,7,8-tetrahydrofolate + H(+). Its pathway is purine metabolism; IMP biosynthesis via de novo pathway; 5-amino-1-(5-phospho-D-ribosyl)imidazole from N(2)-formyl-N(1)-(5-phospho-D-ribosyl)glycinamide: step 2/2. It functions in the pathway purine metabolism; IMP biosynthesis via de novo pathway; N(1)-(5-phospho-D-ribosyl)glycinamide from 5-phospho-alpha-D-ribose 1-diphosphate: step 2/2. It participates in purine metabolism; IMP biosynthesis via de novo pathway; N(2)-formyl-N(1)-(5-phospho-D-ribosyl)glycinamide from N(1)-(5-phospho-D-ribosyl)glycinamide (10-formyl THF route): step 1/1. In terms of biological role, trifunctional enzyme that catalyzes three distinct reactions as part of the 'de novo' inosine monophosphate biosynthetic pathway. In Gallus gallus (Chicken), this protein is Trifunctional purine biosynthetic protein adenosine-3 (GART).